Reading from the N-terminus, the 445-residue chain is Putative U-box domain-containing protein 47 (445 aa).

The 74-residue stretch at 64–137 folds into the U-box domain; the sequence is EVPKEFICTL…KEWCLIHNFD (74 aa).

The catalysed reaction is S-ubiquitinyl-[E2 ubiquitin-conjugating enzyme]-L-cysteine + [acceptor protein]-L-lysine = [E2 ubiquitin-conjugating enzyme]-L-cysteine + N(6)-ubiquitinyl-[acceptor protein]-L-lysine.. It functions in the pathway protein modification; protein ubiquitination. Its function is as follows. Functions as an E3 ubiquitin ligase. The polypeptide is Putative U-box domain-containing protein 47 (PUB47) (Arabidopsis thaliana (Mouse-ear cress)).